We begin with the raw amino-acid sequence, 616 residues long: Chaperone protein HscA (616 aa).

The protein belongs to the heat shock protein 70 family.

Its function is as follows. Chaperone involved in the maturation of iron-sulfur cluster-containing proteins. Has a low intrinsic ATPase activity which is markedly stimulated by HscB. Involved in the maturation of IscU. The protein is Chaperone protein HscA of Citrobacter koseri (strain ATCC BAA-895 / CDC 4225-83 / SGSC4696).